Reading from the N-terminus, the 135-residue chain is uncharacterized protein (135 aa).

The disordered stretch occupies residues 100–125 (KESPATSSEDISSCSDCDSERLQSDD). The segment covering 106 to 115 (SSEDISSCSD) has biased composition (low complexity).

This is an uncharacterized protein from Microplitis demolitor (Parasitoid wasp).